We begin with the raw amino-acid sequence, 425 residues long: Enolase (425 aa).

Gln-165 is a binding site for (2R)-2-phosphoglycerate. The Proton donor role is filled by Glu-207. Residues Asp-244, Glu-285, and Asp-312 each contribute to the Mg(2+) site. (2R)-2-phosphoglycerate is bound by residues Lys-337, Arg-366, Ser-367, and Lys-388. Residue Lys-337 is the Proton acceptor of the active site.

It belongs to the enolase family. It depends on Mg(2+) as a cofactor.

The protein localises to the cytoplasm. It localises to the secreted. The protein resides in the cell surface. The enzyme catalyses (2R)-2-phosphoglycerate = phosphoenolpyruvate + H2O. The protein operates within carbohydrate degradation; glycolysis; pyruvate from D-glyceraldehyde 3-phosphate: step 4/5. Functionally, catalyzes the reversible conversion of 2-phosphoglycerate (2-PG) into phosphoenolpyruvate (PEP). It is essential for the degradation of carbohydrates via glycolysis. The sequence is that of Enolase from Wolbachia sp. subsp. Brugia malayi (strain TRS).